The sequence spans 467 residues: Asparagine--tRNA ligase (467 aa).

It belongs to the class-II aminoacyl-tRNA synthetase family. In terms of assembly, homodimer.

It is found in the cytoplasm. It catalyses the reaction tRNA(Asn) + L-asparagine + ATP = L-asparaginyl-tRNA(Asn) + AMP + diphosphate + H(+). This chain is Asparagine--tRNA ligase, found in Histophilus somni (strain 129Pt) (Haemophilus somnus).